Here is a 251-residue protein sequence, read N- to C-terminus: V-set and transmembrane domain-containing protein 2B (251 aa).

An N-terminal signal peptide occupies residues 1 to 25 (MEKQGLFSALCYLMLNTPLLFSVNA). The region spanning 26 to 142 (TFTEVPKDVT…DETQEHKAQA (117 aa)) is the Ig-like V-type domain. Over 26–226 (TFTEVPKDVT…RQQHGSGTGP (201 aa)) the chain is Extracellular. Residues Cys-46 and Cys-125 are joined by a disulfide bond. Residues 157–213 (AAEAVSHIQSSGPRRNNPSSRATPEPGNKRAVPPAENLAPSLSTAASSSASPAPGKA) are disordered. Composition is skewed to low complexity over residues 166–177 (SSGPRRNNPSSR) and 195–213 (APSL…PGKA). Residues 227-247 (IFANDPALYMFLLIFHQLVYL) traverse the membrane as a helical segment. At 248-251 (LLNH) the chain is on the cytoplasmic side.

It is found in the membrane. The chain is V-set and transmembrane domain-containing protein 2B (vstm2b) from Xenopus tropicalis (Western clawed frog).